The primary structure comprises 44 residues: Thymosin beta-4 (44 aa).

The segment covering methionine 1 to glutamate 25 has biased composition (basic and acidic residues). The interval methionine 1 to serine 44 is disordered. Serine 2 is subject to N-acetylserine. Serine 2 carries the phosphoserine modification. Position 4 is an N6-acetyllysine (lysine 4). Position 12 is an N6-acetyllysine; alternate (lysine 12). Lysine 12 is covalently cross-linked (Glycyl lysine isopeptide (Lys-Gly) (interchain with G-Cter in SUMO2); alternate). Threonine 23 is subject to Phosphothreonine. The residue at position 26 (lysine 26) is an N6-acetyllysine. Serine 31 carries the post-translational modification Phosphoserine. The residue at position 32 (lysine 32) is an N6-acetyllysine. The span at glutamate 33 to serine 44 shows a compositional bias: basic and acidic residues. Phosphothreonine is present on threonine 34. Position 39 is an N6-acetyllysine (lysine 39).

Belongs to the thymosin beta family. As to quaternary structure, identified in a complex composed of ACTA1, COBL, GSN AND TMSB4X. Interacts with SERPINB1. AcSDKP is inactivated by ACE, which removes the dipeptide Lys-Pro from its C-terminus.

It is found in the cytoplasm. Its subcellular location is the cytoskeleton. Functionally, plays an important role in the organization of the cytoskeleton. Binds to and sequesters actin monomers (G actin) and therefore inhibits actin polymerization. Its function is as follows. Potent inhibitor of bone marrow derived stem cell differentiation. Acts by inhibits the entry of hematopoietic pluripotent stem cells into the S-phase. This chain is Thymosin beta-4 (TMSB4), found in Bos taurus (Bovine).